The primary structure comprises 589 residues: PAN2-PAN3 deadenylation complex subunit pan3 (589 aa).

The interval 1–32 is disordered; the sequence is MSVRKNSPASPKPTSRSRESSRSPSVTDLKDH. The segment at 34 to 63 adopts a C3H1-type zinc-finger fold; it reads KAKRTLCRNILLYGSCKHSENGCAFRHDGP. Positions 74 to 94 match the PABPC-interacting motif-2 (PAM-2) motif; the sequence is YSVKKKLNAASASFQPVRALP. Positions 201–457 are pseudokinase domain; it reads EASRQTISAL…NLELFLQNHI (257 aa). ATP contacts are provided by residues Lys255 and 302 to 309; that span reads DFYPCTTT. Residues 458 to 496 adopt a coiled-coil conformation; sequence ESFFPIMSSPYVECEKMERKISDAFQHGRFFNILCKIMF. The knob domain stretch occupies residues 497 to 589; the sequence is IIDNNRASRE…DNVYEMEINS (93 aa).

The protein belongs to the protein kinase superfamily. PAN3 family. Homodimer. Forms a heterotrimer with a catalytic subunit pan2 to form the poly(A)-nuclease (PAN) deadenylation complex. Interacts (via PAM-2 motif) with poly(A)-binding protein pab1 (via PABC domain), conferring substrate specificity of the enzyme complex.

It localises to the cytoplasm. It is found in the nucleus. Regulatory subunit of the poly(A)-nuclease (PAN) deadenylation complex, one of two cytoplasmic mRNA deadenylases involved in mRNA turnover. PAN specifically shortens poly(A) tails of RNA and the activity is stimulated by poly(A)-binding protein pab1. PAN deadenylation is followed by rapid degradation of the shortened mRNA tails by the CCR4-NOT complex. Deadenylated mRNAs are then degraded by two alternative mechanisms, namely exosome-mediated 3'-5' exonucleolytic degradation, or deadenylation-dependent mRNA decaping and subsequent 5'-3' exonucleolytic degradation by xrn1. May also be involved in post-transcriptional maturation of mRNA poly(A) tails. ppk26/pan3 acts as a positive regulator for PAN activity, recruiting the catalytic subunit pan2 to mRNA via its interaction with RNA and with pab1. The protein is PAN2-PAN3 deadenylation complex subunit pan3 (ppk26) of Schizosaccharomyces pombe (strain 972 / ATCC 24843) (Fission yeast).